We begin with the raw amino-acid sequence, 264 residues long: Meiotically up-regulated gene 162 protein (264 aa).

7 consecutive transmembrane segments (helical) span residues 18–38 (IVIF…WNLK), 54–74 (LWIY…AGSA), 84–104 (VFQV…GYSF), 140–160 (IISI…LLFL), 174–194 (HLSY…IKLI), 199–219 (FVLG…SLIT), and 223–243 (LISY…IWIY).

The protein localises to the endoplasmic reticulum membrane. Its function is as follows. Has a role in meiosis. This is Meiotically up-regulated gene 162 protein (mug162) from Schizosaccharomyces pombe (strain 972 / ATCC 24843) (Fission yeast).